Consider the following 357-residue polypeptide: CD4+ T-cell-stimulating antigen (357 aa).

Positions 1–22 are cleaved as a signal peptide; sequence MKKRTFALALSMIIASGVILGA. Cysteine 23 carries the N-palmitoyl cysteine lipid modification. A lipid anchor (S-diacylglycerol cysteine) is attached at cysteine 23.

This sequence belongs to the BMP lipoprotein family.

Its subcellular location is the cell membrane. The protein is CD4+ T-cell-stimulating antigen (tcsA) of Listeria monocytogenes serovar 1/2a (strain ATCC BAA-679 / EGD-e).